The primary structure comprises 151 residues: UPF0178 protein YaiI (151 aa).

It belongs to the UPF0178 family.

The protein is UPF0178 protein YaiI of Salmonella choleraesuis (strain SC-B67).